We begin with the raw amino-acid sequence, 107 residues long: Large ribosomal subunit protein uL24 (107 aa).

It belongs to the universal ribosomal protein uL24 family. As to quaternary structure, part of the 50S ribosomal subunit.

One of two assembly initiator proteins, it binds directly to the 5'-end of the 23S rRNA, where it nucleates assembly of the 50S subunit. Its function is as follows. One of the proteins that surrounds the polypeptide exit tunnel on the outside of the subunit. The sequence is that of Large ribosomal subunit protein uL24 from Mesomycoplasma hyopneumoniae (strain J / ATCC 25934 / NCTC 10110) (Mycoplasma hyopneumoniae).